A 59-amino-acid polypeptide reads, in one-letter code: UPF0181 protein YoaH (59 aa).

This sequence belongs to the UPF0181 family.

This is UPF0181 protein YoaH from Escherichia coli O127:H6 (strain E2348/69 / EPEC).